We begin with the raw amino-acid sequence, 405 residues long: Bestrophin homolog 14 (405 aa).

The next 4 membrane-spanning stretches (helical) occupy residues 28–48 (LIGF…LLDE), 63–83 (IGAQ…LIVA), 223–243 (LVYT…CLIG), and 256–276 (EITI…LGWL).

It belongs to the anion channel-forming bestrophin (TC 1.A.46) family. Calcium-sensitive chloride channel subfamily.

It is found in the membrane. The protein is Bestrophin homolog 14 (best-14) of Caenorhabditis elegans.